The following is a 31-amino-acid chain: PTEN upstream open reading frame MP31 (31 aa).

As to quaternary structure, interacts with lactate dehydrogenases LDHA and LDHB; interaction with mitochondrial LDH leads to inhibition of lactate dehydrogenase activity, preventing conversion of lactate to pyruvate. As to expression, expressed in brain (at protein level). Expressed at lower levels in glioblastomas than in normal brain tissue (at protein level).

The protein localises to the mitochondrion. In terms of biological role, inhibits lactate dehydrogenase (LDH)-mediated conversion of lactate to pyruvate in mitochondria by competing with mitochondrial LDH for binding to NAD(+). Also inhibits cellular lactate utilization. The chain is PTEN upstream open reading frame MP31 from Homo sapiens (Human).